Reading from the N-terminus, the 801-residue chain is Potassium transporter 1 (801 aa).

Positions 1 to 20 are disordered; that stretch reads MSSALEVEGSGSPGVEPAAT. The Cytoplasmic portion of the chain corresponds to 1–57; the sequence is MSSALEVEGSGSPGVEPAATATASRLKRHDSLFGDAEKVSGGKHHGGSAVSWAVTLH. Residues 58–80 traverse the membrane as a helical segment; sequence LAFQSVGIIYGDIGTSPLYVYSS. Over 81 to 94 the chain is Extracellular; that stretch reads TFPDGIGHRDDLVG. The helical transmembrane segment at 95 to 115 threads the bilayer; that stretch reads VLSLILYTLIIIPMLKYVFIV. Residues 116 to 181 are Cytoplasmic-facing; it reads LYANDNGDGG…HKLESSRAAK (66 aa). Residues 182–202 traverse the membrane as a helical segment; it reads MALFFLTILGTSMVMGDGTLT. Topologically, residues 203–219 are extracellular; sequence PAISVLSAVSGIREKAP. A helical membrane pass occupies residues 220-240; that stretch reads NLTQTQVVLISVAILFMLFSV. The Cytoplasmic segment spans residues 241–247; it reads QRFGTDK. The chain crosses the membrane as a helical span at residues 248-268; sequence VGYTFAPIISVWFLLIAGIGL. Topologically, residues 269-298 are extracellular; sequence YNLVVHEITILKAFNPWYIVQYFRRNGKKG. A helical transmembrane segment spans residues 299–319; it reads WVSLGGVVLCVTGTEGMFADL. At 320–328 the chain is on the cytoplasmic side; that stretch reads GHFNIRAVQ. A helical transmembrane segment spans residues 329 to 349; it reads ISFNCILFPSVALCYIGQAAY. Over 350–375 the chain is Extracellular; it reads LRKFPENVSDTFYKSIPGKYRDRLNF. A helical membrane pass occupies residues 376 to 398; sequence GPLFWPTFIVAILAAIIASQAML. At 399-429 the chain is on the cytoplasmic side; the sequence is SGAFAILSKALSLGCLPRVRVIHTSKKYEGQ. A helical transmembrane segment spans residues 430–450; it reads VYIPEVNFMMGLASIIVTIAF. The Extracellular portion of the chain corresponds to 451–461; the sequence is RTTTSIGNAYG. The chain crosses the membrane as a helical span at residues 462–482; the sequence is ICVVTTFMVTTHLMTVVMLLI. Residues 483–487 lie on the Cytoplasmic side of the membrane; the sequence is WKKHL. A helical membrane pass occupies residues 488–508; that stretch reads VFILLFYCVFGFTEVVYLSSI. The Extracellular segment spans residues 509-511; that stretch reads LSK. A helical transmembrane segment spans residues 512–532; sequence FVDGGYLPFCFAMVLMTMMAT. Over 533–801 the chain is Cytoplasmic; that stretch reads WHYVHVRRYW…LLKVGITYEI (269 aa). The tract at residues 679 to 728 is disordered; the sequence is DDDDEAAARPRRSTSSAVHSEEAIQAASSGRTTASSVQLQAGGEPPAAMD. Residues 704-717 are compositionally biased toward polar residues; the sequence is AASSGRTTASSVQL.

The protein belongs to the HAK/KUP transporter (TC 2.A.72.3) family. In terms of tissue distribution, expressed almost exclusively in roots.

The protein resides in the cell membrane. In terms of biological role, high-affinity potassium transporter. Also transports rubidium, with the same affinity and cesium, with a lower affinity. This is Potassium transporter 1 (HAK1) from Oryza sativa subsp. japonica (Rice).